We begin with the raw amino-acid sequence, 382 residues long: Chorismate synthase (382 aa).

Residues R39 and R45 each contribute to the NADP(+) site. The tract at residues 89–113 (SPEPGGEPRKKALTDARPGHADLTG) is disordered. Positions 94–108 (GEPRKKALTDARPGH) are enriched in basic and acidic residues. FMN is bound by residues 128 to 130 (RAS), 246 to 247 (QA), A290, 305 to 309 (KPIAT), and R331.

Belongs to the chorismate synthase family. In terms of assembly, homotetramer. It depends on FMNH2 as a cofactor.

The catalysed reaction is 5-O-(1-carboxyvinyl)-3-phosphoshikimate = chorismate + phosphate. It functions in the pathway metabolic intermediate biosynthesis; chorismate biosynthesis; chorismate from D-erythrose 4-phosphate and phosphoenolpyruvate: step 7/7. Functionally, catalyzes the anti-1,4-elimination of the C-3 phosphate and the C-6 proR hydrogen from 5-enolpyruvylshikimate-3-phosphate (EPSP) to yield chorismate, which is the branch point compound that serves as the starting substrate for the three terminal pathways of aromatic amino acid biosynthesis. This reaction introduces a second double bond into the aromatic ring system. The polypeptide is Chorismate synthase (Deinococcus radiodurans (strain ATCC 13939 / DSM 20539 / JCM 16871 / CCUG 27074 / LMG 4051 / NBRC 15346 / NCIMB 9279 / VKM B-1422 / R1)).